Here is a 258-residue protein sequence, read N- to C-terminus: SLA class II histocompatibility antigen, DQ haplotype D beta chain (258 aa).

The N-terminal stretch at 1–31 (MVALRLPRGLWTAALTVMLVVLGAPVAEGRD) is a signal peptide. The beta-1 stretch occupies residues 32 to 123 (SPQDFVVQFK…IEEGTTLQRR (92 aa)). Topologically, residues 32 to 227 (SPQDFVVQFK…RAQSESAQSK (196 aa)) are extracellular. 2 disulfide bridges follow: Cys44–Cys108 and Cys146–Cys202. Asn48 carries an N-linked (GlcNAc...) asparagine glycan. The beta-2 stretch occupies residues 124-217 (VQPTVTISPS…SLQSPILVEW (94 aa)). Positions 126–230 (PTVTISPSKA…SESAQSKMLS (105 aa)) constitute an Ig-like C1-type domain. The segment at 218-227 (RAQSESAQSK) is connecting peptide. Residues 228 to 248 (MLSGVGGFVLGLIFLGLGLFI) form a helical membrane-spanning segment. Topologically, residues 249–258 (RHRSQKGLVR) are cytoplasmic.

It belongs to the MHC class II family.

It localises to the membrane. This chain is SLA class II histocompatibility antigen, DQ haplotype D beta chain, found in Sus scrofa (Pig).